The following is a 315-amino-acid chain: Methionyl-tRNA formyltransferase (315 aa).

113-116 (SLLP) lines the (6S)-5,6,7,8-tetrahydrofolate pocket.

Belongs to the Fmt family.

The enzyme catalyses L-methionyl-tRNA(fMet) + (6R)-10-formyltetrahydrofolate = N-formyl-L-methionyl-tRNA(fMet) + (6S)-5,6,7,8-tetrahydrofolate + H(+). In terms of biological role, attaches a formyl group to the free amino group of methionyl-tRNA(fMet). The formyl group appears to play a dual role in the initiator identity of N-formylmethionyl-tRNA by promoting its recognition by IF2 and preventing the misappropriation of this tRNA by the elongation apparatus. This chain is Methionyl-tRNA formyltransferase, found in Salmonella enteritidis PT4 (strain P125109).